A 161-amino-acid polypeptide reads, in one-letter code: Large ribosomal subunit protein uL15 (161 aa).

The tract at residues 1–42 (MKLSDIADNAGSRKKRMRVGRGIGSGKGKQSGRGGKGQTARS) is disordered. The segment covering 21–37 (RGIGSGKGKQSGRGGKG) has biased composition (gly residues).

This sequence belongs to the universal ribosomal protein uL15 family. As to quaternary structure, part of the 50S ribosomal subunit.

Functionally, binds to the 23S rRNA. The chain is Large ribosomal subunit protein uL15 from Bradyrhizobium diazoefficiens (strain JCM 10833 / BCRC 13528 / IAM 13628 / NBRC 14792 / USDA 110).